The sequence spans 187 residues: Phosphatidylethanolamine-binding protein 1 (187 aa).

A2 is modified (N-acetylalanine; in peptide hippocampal cholinergic neurostimulating). Phosphoserine is present on residues S6 and S13. T42 bears the Phosphothreonine mark. S52, S54, S98, and S153 each carry phosphoserine. Residues 93–134 are interaction with RAF1; that stretch reads KGNDISSGTVLSEYVGSGPPKDTGLHRYVWLVYEQEQPLNCD.

The protein belongs to the phosphatidylethanolamine-binding protein family. Has a tendency to form dimers by disulfide cross-linking. Interacts with RAF1 and this interaction is enhanced if RAF1 is phosphorylated on residues 'Ser-338', 'Ser-339', 'Tyr-340' and 'Tyr-341'. Interacts with ALOX15; in response to IL13/interleukin-13, prevents the interaction of PEBP1 with RAF1 to activate the ERK signaling cascade. As to expression, major component of epididymal secretions and sperm plasma membranes. It is present in cytosols from a variety of other tissues. Highly expressed in brain.

It localises to the cytoplasm. Its subcellular location is the membrane. Functionally, binds ATP, opioids and phosphatidylethanolamine. Has lower affinity for phosphatidylinositol and phosphatidylcholine. Serine protease inhibitor which inhibits thrombin, neuropsin and chymotrypsin but not trypsin, tissue type plasminogen activator and elastase. Inhibits the kinase activity of RAF1 by inhibiting its activation and by dissociating the RAF1/MEK complex and acting as a competitive inhibitor of MEK phosphorylation. HCNP may be involved in the function of the presynaptic cholinergic neurons of the central nervous system. HCNP increases the production of choline acetyltransferase but not acetylcholinesterase. Seems to be mediated by a specific receptor. The protein is Phosphatidylethanolamine-binding protein 1 (Pebp1) of Rattus norvegicus (Rat).